Reading from the N-terminus, the 550-residue chain is Amino acid transporter AVT1D (550 aa).

Residues 1–16 (MKLDEEFLHDRDHSFL) show a composition bias toward basic and acidic residues. Residues 1-99 (MKLDEEFLHD…FMPQSSSRRL (99 aa)) form a disordered region. Residues 84–99 (TPPSVSFMPQSSSRRL) are compositionally biased toward polar residues. 11 consecutive transmembrane segments (helical) span residues 164-184 (SVLN…PYAI), 189-209 (WLGL…GVLM), 236-256 (FIIS…YIIM), 264-286 (LFPN…IFAI), 308-328 (SVGG…VGAV), 345-365 (LPVT…FPNI), 375-395 (FPLV…AVAV), 424-444 (VWTA…PIVM), 459-479 (GVSI…ALSV), 481-501 (FFAI…ALIF), and 521-541 (LCIF…YSAI).

It belongs to the amino acid/polyamine transporter 2 family. Amino acid/auxin permease (AAAP) (TC 2.A.18.5) subfamily.

The protein resides in the membrane. The protein is Amino acid transporter AVT1D of Arabidopsis thaliana (Mouse-ear cress).